The sequence spans 78 residues: Protein Vpr (78 aa).

The tract at residues 1–42 (MEQAPEDQGPQREPHNEWTLELLEELKNEAVRHFPRIWLHGL) is homooligomerization.

This sequence belongs to the HIV-1 VPR protein family. In terms of assembly, homooligomer, may form homodimer. Interacts with p6-gag region of the Pr55 Gag precursor protein through a (Leu-X-X)4 motif near the C-terminus of the P6gag protein. Interacts with host UNG. May interact with host RAD23A/HHR23A. Interacts with host VPRBP/DCAF1, leading to hijack the CUL4A-RBX1-DDB1-DCAF1/VPRBP complex, mediating ubiquitination of host proteins such as TERT and ZGPAT and arrest of the cell cycle in G2 phase. Phosphorylated on several residues by host. These phosphorylations regulate VPR activity for the nuclear import of the HIV-1 pre-integration complex.

Its subcellular location is the virion. It is found in the host nucleus. It localises to the host extracellular space. In terms of biological role, during virus replication, may deplete host UNG protein, and incude G2-M cell cycle arrest. Acts by targeting specific host proteins for degradation by the 26S proteasome, through association with the cellular CUL4A-DDB1 E3 ligase complex by direct interaction with host VPRPB/DCAF-1. Cell cycle arrest reportedly occurs within hours of infection and is not blocked by antiviral agents, suggesting that it is initiated by the VPR carried into the virion. Additionally, VPR induces apoptosis in a cell cycle dependent manner suggesting that these two effects are mechanistically linked. Detected in the serum and cerebrospinal fluid of AIDS patient, VPR may also induce cell death to bystander cells. During virus entry, plays a role in the transport of the viral pre-integration (PIC) complex to the host nucleus. This function is crucial for viral infection of non-dividing macrophages. May act directly at the nuclear pore complex, by binding nucleoporins phenylalanine-glycine (FG)-repeat regions. The chain is Protein Vpr from Human immunodeficiency virus type 1 group M subtype B (isolate PCV12) (HIV-1).